We begin with the raw amino-acid sequence, 878 residues long: Alanine--tRNA ligase (878 aa).

4 residues coordinate Zn(2+): H562, H566, C670, and H674.

Belongs to the class-II aminoacyl-tRNA synthetase family. Zn(2+) serves as cofactor.

It is found in the cytoplasm. It catalyses the reaction tRNA(Ala) + L-alanine + ATP = L-alanyl-tRNA(Ala) + AMP + diphosphate. Catalyzes the attachment of alanine to tRNA(Ala) in a two-step reaction: alanine is first activated by ATP to form Ala-AMP and then transferred to the acceptor end of tRNA(Ala). Also edits incorrectly charged Ser-tRNA(Ala) and Gly-tRNA(Ala) via its editing domain. This Acinetobacter baylyi (strain ATCC 33305 / BD413 / ADP1) protein is Alanine--tRNA ligase.